The following is a 1103-amino-acid chain: Centrosomal protein of 126 kDa (1103 aa).

The span at 1–12 shows a compositional bias: low complexity; the sequence is MLAGRPGAQSAG. Residues 1-36 are disordered; sequence MLAGRPGAQSAGAGVGAGPPDAPGARDGGGRPRPGA. Coiled-coil stretches lie at residues 43-116 and 182-222; these read HLEK…FQRA and QKHL…KLLE. 2 disordered regions span residues 380–409 and 723–812; these read NTAE…ESPT and ESKA…PGQS. The span at 723–735 shows a compositional bias: basic and acidic residues; that stretch reads ESKAPVHASDSKT. Residues 736–748 show a composition bias toward basic residues; sequence QKTKPQRGVKFTR. Composition is skewed to polar residues over residues 763-784 and 798-812; these read RKPT…QTQG and NIKS…PGQS.

In terms of assembly, interacts with DCTN1.

It localises to the midbody. The protein localises to the cytoplasm. The protein resides in the cytoskeleton. Its subcellular location is the microtubule organizing center. It is found in the centrosome. It localises to the cilium basal body. In terms of biological role, participate in cytokinesis. Necessary for microtubules and mitotic spindle organization. Involved in primary cilium formation. This is Centrosomal protein of 126 kDa from Mus musculus (Mouse).